The primary structure comprises 197 residues: Dephospho-CoA kinase (197 aa).

A DPCK domain is found at 4-197; that stretch reads LIGLTGGIAT…VLKWLKTITK (194 aa). ATP is bound at residue 12–17; that stretch reads ATGKST.

The protein belongs to the CoaE family.

It is found in the cytoplasm. The catalysed reaction is 3'-dephospho-CoA + ATP = ADP + CoA + H(+). It functions in the pathway cofactor biosynthesis; coenzyme A biosynthesis; CoA from (R)-pantothenate: step 5/5. Its function is as follows. Catalyzes the phosphorylation of the 3'-hydroxyl group of dephosphocoenzyme A to form coenzyme A. In Lactiplantibacillus plantarum (strain ATCC BAA-793 / NCIMB 8826 / WCFS1) (Lactobacillus plantarum), this protein is Dephospho-CoA kinase.